Consider the following 335-residue polypeptide: Magnesium-protoporphyrin IX monomethyl ester [oxidative] cyclase (335 aa).

Belongs to the AcsF family. Fe cation serves as cofactor.

It is found in the plastid. Its subcellular location is the chloroplast. It carries out the reaction Mg-protoporphyrin IX 13-monomethyl ester + 3 NADPH + 3 O2 + 2 H(+) = 3,8-divinyl protochlorophyllide a + 3 NADP(+) + 5 H2O. It functions in the pathway porphyrin-containing compound metabolism; chlorophyll biosynthesis (light-independent). Its function is as follows. Catalyzes the formation of the isocyclic ring in chlorophyll biosynthesis. Mediates the cyclase reaction, which results in the formation of divinylprotochlorophyllide (Pchlide) characteristic of all chlorophylls from magnesium-protoporphyrin IX 13-monomethyl ester (MgPMME). This chain is Magnesium-protoporphyrin IX monomethyl ester [oxidative] cyclase, found in Cyanidioschyzon merolae (strain NIES-3377 / 10D) (Unicellular red alga).